The primary structure comprises 513 residues: Type-2 serine--tRNA ligase (513 aa).

An L-serine-binding site is contributed by A312. C314 is a Zn(2+) binding site. R344 contacts L-serine. Residues 344 to 346 (RWE) and 355 to 356 (RV) contribute to the ATP site. 361–363 (RVE) lines the L-serine pocket. E363 and C467 together coordinate Zn(2+). R474 contacts ATP.

The protein belongs to the class-II aminoacyl-tRNA synthetase family. Type-2 seryl-tRNA synthetase subfamily. As to quaternary structure, homodimer. Zn(2+) serves as cofactor.

It localises to the cytoplasm. It catalyses the reaction tRNA(Ser) + L-serine + ATP = L-seryl-tRNA(Ser) + AMP + diphosphate + H(+). It carries out the reaction tRNA(Sec) + L-serine + ATP = L-seryl-tRNA(Sec) + AMP + diphosphate + H(+). The protein operates within aminoacyl-tRNA biosynthesis; selenocysteinyl-tRNA(Sec) biosynthesis; L-seryl-tRNA(Sec) from L-serine and tRNA(Sec): step 1/1. Functionally, catalyzes the attachment of serine to tRNA(Ser). Is also able to aminoacylate tRNA(Sec) with serine, to form the misacylated tRNA L-seryl-tRNA(Sec), which will be further converted into selenocysteinyl-tRNA(Sec). The polypeptide is Type-2 serine--tRNA ligase (serS) (Methanothermobacter thermautotrophicus (strain ATCC 29096 / DSM 1053 / JCM 10044 / NBRC 100330 / Delta H) (Methanobacterium thermoautotrophicum)).